The sequence spans 338 residues: Fructose-1,6-bisphosphatase 1 (338 aa).

At alanine 2 the chain carries N-acetylalanine. Residues 18–22 and 28–32 each bind AMP; these read VMEQG and TGELT. Mg(2+) contacts are provided by aspartate 69 and glutamate 98. 113 to 114 lines the AMP pocket; sequence KY. Residues aspartate 119, leucine 121, and aspartate 122 each contribute to the Mg(2+) site. Substrate is bound at residue 122–125; it reads DGSS. Residue arginine 141 coordinates AMP. N6-succinyllysine is present on lysine 151. Substrate contacts are provided by residues 213–216, 244–249, tyrosine 265, and 275–277; these read NEGY, RYVGSM, and KLR. 3 positions are modified to phosphotyrosine: tyrosine 216, tyrosine 245, and tyrosine 265. Glutamate 281 is a binding site for Mg(2+).

It belongs to the FBPase class 1 family. In terms of assembly, homotetramer. It depends on Mg(2+) as a cofactor. In terms of tissue distribution, detected in pancreatic beta-cell lines MIN6 and beta-TC and in liver (at protein level). Preferentially expressed in liver, with lower levels detected in pancreatic islets and intestine, and very low levels in blood, muscle, brain and spleen.

It carries out the reaction beta-D-fructose 1,6-bisphosphate + H2O = beta-D-fructose 6-phosphate + phosphate. Its pathway is carbohydrate biosynthesis; gluconeogenesis. Its activity is regulated as follows. Subject to complex allosteric regulation. The enzyme can assume an active R-state, or an inactive T-state. Intermediate conformations may exist. AMP acts as an allosteric inhibitor. AMP binding affects the turnover of bound substrate and not the affinity for substrate. Fructose 2,6-bisphosphate acts as a competitive inhibitor. Fructose 2,6-bisphosphate and AMP have synergistic effects. Catalyzes the hydrolysis of fructose 1,6-bisphosphate to fructose 6-phosphate in the presence of divalent cations, acting as a rate-limiting enzyme in gluconeogenesis. Plays a role in regulating glucose sensing and insulin secretion of pancreatic beta-cells. Appears to modulate glycerol gluconeogenesis in liver. Important regulator of appetite and adiposity; increased expression of the protein in liver after nutrient excess increases circulating satiety hormones and reduces appetite-stimulating neuropeptides and thus seems to provide a feedback mechanism to limit weight gain. This chain is Fructose-1,6-bisphosphatase 1 (Fbp1), found in Mus musculus (Mouse).